The chain runs to 94 residues: Large ribosomal subunit protein bL27 (94 aa).

Residues 1–9 (MLKLNLQFF) constitute a propeptide that is removed on maturation.

The protein belongs to the bacterial ribosomal protein bL27 family. Post-translationally, the N-terminus is cleaved by ribosomal processing cysteine protease Prp.

The polypeptide is Large ribosomal subunit protein bL27 (Staphylococcus aureus (strain Mu3 / ATCC 700698)).